The primary structure comprises 467 residues: Uronate isomerase (467 aa).

This sequence belongs to the metallo-dependent hydrolases superfamily. Uronate isomerase family.

The enzyme catalyses D-glucuronate = D-fructuronate. It carries out the reaction aldehydo-D-galacturonate = keto-D-tagaturonate. The protein operates within carbohydrate metabolism; pentose and glucuronate interconversion. In Streptococcus uberis (strain ATCC BAA-854 / 0140J), this protein is Uronate isomerase.